The following is a 64-amino-acid chain: Conotoxin Pu3.4 (64 aa).

The signal sequence occupies residues 1-16 (LGVLLPICLLLFPLTA). Residues 17 to 49 (LPLDGDQPADRPAERMQDDFITEQHPLFDPVKR) constitute a propeptide that is removed on maturation. 3 disulfides stabilise this stretch: Cys-50–Cys-63, Cys-51–Cys-59, and Cys-55–Cys-62. A 4-hydroxyproline modification is found at Pro-61.

The protein belongs to the conotoxin M superfamily. As to expression, expressed by the venom duct.

The protein resides in the secreted. This Conus pulicarius (Flea-bitten cone) protein is Conotoxin Pu3.4.